A 412-amino-acid chain; its full sequence is Serine hydroxymethyltransferase (412 aa).

Residues L117 and 121-123 (GHL) each bind (6S)-5,6,7,8-tetrahydrofolate. K226 is modified (N6-(pyridoxal phosphate)lysine). 349 to 351 (SPF) lines the (6S)-5,6,7,8-tetrahydrofolate pocket.

Belongs to the SHMT family. Homodimer. Requires pyridoxal 5'-phosphate as cofactor.

It localises to the cytoplasm. The enzyme catalyses (6R)-5,10-methylene-5,6,7,8-tetrahydrofolate + glycine + H2O = (6S)-5,6,7,8-tetrahydrofolate + L-serine. The protein operates within one-carbon metabolism; tetrahydrofolate interconversion. Its pathway is amino-acid biosynthesis; glycine biosynthesis; glycine from L-serine: step 1/1. Catalyzes the reversible interconversion of serine and glycine with tetrahydrofolate (THF) serving as the one-carbon carrier. This reaction serves as the major source of one-carbon groups required for the biosynthesis of purines, thymidylate, methionine, and other important biomolecules. Also exhibits THF-independent aldolase activity toward beta-hydroxyamino acids, producing glycine and aldehydes, via a retro-aldol mechanism. This chain is Serine hydroxymethyltransferase, found in Halothermothrix orenii (strain H 168 / OCM 544 / DSM 9562).